A 620-amino-acid polypeptide reads, in one-letter code: Ran-binding protein 10 (620 aa).

Residues 1 to 34 (MAAATADPGAGSPQVGDSSGGATGCGLPSPGEQE) are disordered. Alanine 2 is modified (N-acetylalanine). The 188-residue stretch at 35–222 (LSRRLQRLYP…VDANFGQQPF (188 aa)) folds into the B30.2/SPRY domain. The LisH domain occupies 253-285 (WQAVLQNMVSSYLVHHGYCATATAFARMTETPI). A CTLH domain is found at 291–348 (SIKNRQKIQKLVLEGRVGEAIETTQRFYPGLLEHNPNLLFMLKCRQFVEMVNGTDSEV). Over residues 347–398 (EVRSLSSRSPKSQDSYPGSPSLSPRHGPTSSHTHNTGADSPSCSNGVASTKS) the composition is skewed to polar residues. The disordered stretch occupies residues 347–459 (EVRSLSSRSP…TSDSEMEMEA (113 aa)). Residue serine 361 is modified to Phosphoserine. At tyrosine 362 the chain carries Phosphotyrosine. Phosphoserine is present on residues serine 365, serine 367, serine 369, and serine 422. A compositionally biased stretch (low complexity) spans 409–436 (SSSSSSSSSSSSSSPSSVNYSESNSTDS). The span at 437-450 (TKSQPHSSTSNQET) shows a compositional bias: polar residues. Phosphoserine occurs at positions 451 and 453.

The protein belongs to the RANBP9/10 family. In terms of assembly, may form homodimers. Identified in the CTLH complex that contains GID4, RANBP9 and/or RANBP10, MKLN1, MAEA, RMND5A (or alternatively its paralog RMND5B), GID8, ARMC8, WDR26 and YPEL5. Within this complex, MAEA, RMND5A (or alternatively its paralog RMND5B), GID8, WDR26, and RANBP9 and/or RANBP10 form the catalytic core, while GID4, MKLN1, ARMC8 and YPEL5 have ancillary roles. Interacts with RAN and RANBP9. Interacts with the HGF receptor MET. Interacts with AR. Interacts with TUBB1. Interacts with YPEL5. May interact with TUBB5. Interacts with DDX4.

It localises to the cytoplasm. Its subcellular location is the cytosol. The protein resides in the nucleus. May act as an adapter protein to couple membrane receptors to intracellular signaling pathways. Core component of the CTLH E3 ubiquitin-protein ligase complex that selectively accepts ubiquitin from UBE2H and mediates ubiquitination and subsequent proteasomal degradation of the transcription factor HBP1. Enhances dihydrotestosterone-induced transactivation activity of AR, as well as dexamethasone-induced transactivation activity of NR3C1, but does not affect estrogen-induced transactivation. Acts as a guanine nucleotide exchange factor (GEF) for RAN GTPase. May play an essential role in hemostasis and in maintaining microtubule dynamics with respect to both platelet shape and function. The chain is Ran-binding protein 10 (RANBP10) from Bos taurus (Bovine).